Consider the following 220-residue polypeptide: MALELWQTLKEAIHAYTGLSPVVFFTALALAFAIYQVISGWFASPFDDVNRHQRARSLAQEEEPPIPQPVQVGEITEEELKQYDGSDPQKPLLMAIKHQIYDVTQSRMFYGPGGPYALFAGKDASRALAKMSFEEKDLTWDVSGLGPFELDALQDWEYKFMSKYAKVGTVKVAGSEPETASVSEPTENVEQDAHVTTTPGKTVVDKSDDAPAETVLKKEE.

Residues 22–42 (VVFFTALALAFAIYQVISGWF) form a helical membrane-spanning segment. The Cytochrome b5 heme-binding domain occupies 74 to 171 (EITEEELKQY…SKYAKVGTVK (98 aa)). Residues 74 to 171 (EITEEELKQY…SKYAKVGTVK (98 aa)) form a steroid-binding region. The interval 174 to 220 (GSEPETASVSEPTENVEQDAHVTTTPGKTVVDKSDDAPAETVLKKEE) is disordered. A compositionally biased stretch (polar residues) spans 178–200 (ETASVSEPTENVEQDAHVTTTPG). Basic and acidic residues predominate over residues 203–220 (VVDKSDDAPAETVLKKEE).

The protein belongs to the cytochrome b5 family. MAPR subfamily. As to quaternary structure, interacts with BAK1 (via extracellular region). As to expression, expressed in cotyledons, stems, roots, leaves, flower and silique stalks, pistils and stigmas, but not in anthers.

Its subcellular location is the cell membrane. The protein resides in the endosome membrane. Functionally, MSBP1 can bind to multiple steroid compounds with different affinities. Negatively regulates cell elongation and brassinosteroid signaling. May act as a coreceptor with BAK1 and enhances its endocytosis. The sequence is that of Membrane steroid-binding protein 1 (MSBP1) from Arabidopsis thaliana (Mouse-ear cress).